Here is a 258-residue protein sequence, read N- to C-terminus: WPVRSAAPSSSAFISANHFSSDDDSSSPRSISPSLASVFLHHTRGFSSNSVSPAHDMGLVPDLPPTVAAIKNPTSKIVYDEHNHERYPPGDPSKRAFAYFVLTGGRFVYASLMRLLILKFVLSMSASKDVLALASLEVDLSSIEPGTTVTVKWRGKPVFIRRRTEDDISLANSVDLGSLRDPQQDAERVKNPEWLVVIGVCTHLGCIPLPNAGDFGGWFCPCHGSHYDISGRIRKGPAPYNLEVPTYSFLEENKLLIG.

Residues 1–46 (WPVRSAAPSSSAFISANHFSSDDDSSSPRSISPSLASVFLHHTRGF) constitute a mitochondrion transit peptide. Over 47 to 95 (SSNSVSPAHDMGLVPDLPPTVAAIKNPTSKIVYDEHNHERYPPGDPSKR) the chain is Mitochondrial matrix. A helical transmembrane segment spans residues 96-118 (AFAYFVLTGGRFVYASLMRLLIL). Over 119–258 (KFVLSMSASK…FLEENKLLIG (140 aa)) the chain is Mitochondrial intermembrane. A Rieske domain is found at 161-256 (RRRTEDDISL…YSFLEENKLL (96 aa)). Positions 201, 203, 220, and 223 each coordinate [2Fe-2S] cluster. A disulfide bridge connects residues Cys-206 and Cys-222.

Belongs to the Rieske iron-sulfur protein family. As to quaternary structure, component of the ubiquinol-cytochrome c oxidoreductase (cytochrome b-c1 complex, complex III, CIII), a multisubunit enzyme composed of 3 respiratory subunits cytochrome b, cytochrome c1 and Rieske protein, 2 core protein subunits, and several low-molecular weight protein subunits. The complex exists as an obligatory dimer and forms supercomplexes (SCs) in the inner mitochondrial membrane with cytochrome c oxidase (complex IV, CIV). The cofactor is [2Fe-2S] cluster.

The protein resides in the mitochondrion inner membrane. The enzyme catalyses a quinol + 2 Fe(III)-[cytochrome c](out) = a quinone + 2 Fe(II)-[cytochrome c](out) + 2 H(+)(out). In terms of biological role, component of the ubiquinol-cytochrome c oxidoreductase, a multisubunit transmembrane complex that is part of the mitochondrial electron transport chain which drives oxidative phosphorylation. The respiratory chain contains 3 multisubunit complexes succinate dehydrogenase (complex II, CII), ubiquinol-cytochrome c oxidoreductase (cytochrome b-c1 complex, complex III, CIII) and cytochrome c oxidase (complex IV, CIV), that cooperate to transfer electrons derived from NADH and succinate to molecular oxygen, creating an electrochemical gradient over the inner membrane that drives transmembrane transport and the ATP synthase. The cytochrome b-c1 complex catalyzes electron transfer from ubiquinol to cytochrome c, linking this redox reaction to translocation of protons across the mitochondrial inner membrane, with protons being carried across the membrane as hydrogens on the quinol. In the process called Q cycle, 2 protons are consumed from the matrix, 4 protons are released into the intermembrane space and 2 electrons are passed to cytochrome c. The Rieske protein is a catalytic core subunit containing a [2Fe-2S] iron-sulfur cluster. It cycles between 2 conformational states during catalysis to transfer electrons from the quinol bound in the Q(0) site in cytochrome b to cytochrome c1. The sequence is that of Cytochrome b-c1 complex subunit Rieske-1, mitochondrial from Nicotiana tabacum (Common tobacco).